We begin with the raw amino-acid sequence, 235 residues long: MIFNVLTIFPDMFPGPLGYSTVGNALRKGLWSLNVVDIRSFASDKHSTVDDKPYGGGPGMLMKADVLGRCIDSVLEAHPDTRLIYTSPKGKQFTQDMSRQIVHFGNITLLCGRFEGIDERVVDVYNFQEVSIGDYVISGGELAAMVVIDSCVRMVTGVIGNKDSLNRESFDCGLEYPQYTRPASWKGVSVPDVLLRGNHKETELWRCKMSRIITERRRPDLLKDCGGEEEGSSNE.

Residues Gly112 and 132 to 137 (IGDYVI) each bind S-adenosyl-L-methionine.

Belongs to the RNA methyltransferase TrmD family. Homodimer.

It localises to the cytoplasm. The catalysed reaction is guanosine(37) in tRNA + S-adenosyl-L-methionine = N(1)-methylguanosine(37) in tRNA + S-adenosyl-L-homocysteine + H(+). Specifically methylates guanosine-37 in various tRNAs. The protein is tRNA (guanine-N(1)-)-methyltransferase of Anaplasma marginale (strain St. Maries).